A 474-amino-acid polypeptide reads, in one-letter code: UDP-N-acetylmuramoyl-L-alanyl-D-glutamate--2,6-diaminopimelate ligase (474 aa).

Serine 21 is a UDP-N-acetyl-alpha-D-muramoyl-L-alanyl-D-glutamate binding site. 93–99 (GTNGKSS) provides a ligand contact to ATP. Residues 139–140 (TT), serine 166, glutamine 172, and arginine 174 contribute to the UDP-N-acetyl-alpha-D-muramoyl-L-alanyl-D-glutamate site. Lysine 206 is subject to N6-carboxylysine. Meso-2,6-diaminopimelate contacts are provided by residues arginine 367, 391–394 (DNPR), glycine 441, and glutamate 445. Residues 391–394 (DNPR) carry the Meso-diaminopimelate recognition motif motif.

This sequence belongs to the MurCDEF family. MurE subfamily. The cofactor is Mg(2+). Post-translationally, carboxylation is probably crucial for Mg(2+) binding and, consequently, for the gamma-phosphate positioning of ATP.

The protein resides in the cytoplasm. It catalyses the reaction UDP-N-acetyl-alpha-D-muramoyl-L-alanyl-D-glutamate + meso-2,6-diaminopimelate + ATP = UDP-N-acetyl-alpha-D-muramoyl-L-alanyl-gamma-D-glutamyl-meso-2,6-diaminopimelate + ADP + phosphate + H(+). Its pathway is cell wall biogenesis; peptidoglycan biosynthesis. In terms of biological role, catalyzes the addition of meso-diaminopimelic acid to the nucleotide precursor UDP-N-acetylmuramoyl-L-alanyl-D-glutamate (UMAG) in the biosynthesis of bacterial cell-wall peptidoglycan. This chain is UDP-N-acetylmuramoyl-L-alanyl-D-glutamate--2,6-diaminopimelate ligase, found in Rickettsia bellii (strain RML369-C).